Reading from the N-terminus, the 183-residue chain is ATP synthase subunit b, chloroplastic (183 aa).

A helical membrane pass occupies residues 25 to 45; sequence DILATNLINLTVVVGVLIFFG.

Belongs to the ATPase B chain family. In terms of assembly, F-type ATPases have 2 components, F(1) - the catalytic core - and F(0) - the membrane proton channel. F(1) has five subunits: alpha(3), beta(3), gamma(1), delta(1), epsilon(1). F(0) has four main subunits: a(1), b(1), b'(1) and c(10-14). The alpha and beta chains form an alternating ring which encloses part of the gamma chain. F(1) is attached to F(0) by a central stalk formed by the gamma and epsilon chains, while a peripheral stalk is formed by the delta, b and b' chains.

Its subcellular location is the plastid. The protein resides in the chloroplast thylakoid membrane. F(1)F(0) ATP synthase produces ATP from ADP in the presence of a proton or sodium gradient. F-type ATPases consist of two structural domains, F(1) containing the extramembraneous catalytic core and F(0) containing the membrane proton channel, linked together by a central stalk and a peripheral stalk. During catalysis, ATP synthesis in the catalytic domain of F(1) is coupled via a rotary mechanism of the central stalk subunits to proton translocation. Its function is as follows. Component of the F(0) channel, it forms part of the peripheral stalk, linking F(1) to F(0). The protein is ATP synthase subunit b, chloroplastic of Saccharum hybrid (Sugarcane).